The sequence spans 315 residues: Methionyl-tRNA formyltransferase (315 aa).

114–117 (SLLP) is a (6S)-5,6,7,8-tetrahydrofolate binding site.

This sequence belongs to the Fmt family.

It carries out the reaction L-methionyl-tRNA(fMet) + (6R)-10-formyltetrahydrofolate = N-formyl-L-methionyl-tRNA(fMet) + (6S)-5,6,7,8-tetrahydrofolate + H(+). In terms of biological role, attaches a formyl group to the free amino group of methionyl-tRNA(fMet). The formyl group appears to play a dual role in the initiator identity of N-formylmethionyl-tRNA by promoting its recognition by IF2 and preventing the misappropriation of this tRNA by the elongation apparatus. The protein is Methionyl-tRNA formyltransferase of Corynebacterium efficiens (strain DSM 44549 / YS-314 / AJ 12310 / JCM 11189 / NBRC 100395).